The following is a 231-amino-acid chain: Transmembrane protein 225 (231 aa).

Topologically, residues 1 to 13 (MVHILVRKVEATN) are cytoplasmic. Residues 14 to 34 (MFFSSWTLVFLAVGIIIEEWA) form a helical membrane-spanning segment. At 35-67 (ELKLGPQKPTITHSPWICCTPLWPSDGLEVIRN) the chain is on the extracellular side. Residues 68–88 (ILIVVLSLSFMHNLLLGFEFT) form a helical membrane-spanning segment. Residues 89–97 (YMIPQTKYT) lie on the Cytoplasmic side of the membrane. Residues 98 to 118 (LIMTACLAFLTGILLLGALLL) traverse the membrane as a helical segment. The Extracellular segment spans residues 119–135 (YHHMLRQGESVYYSSYK). A helical transmembrane segment spans residues 136–156 (ISWIIFTAYLNVLFLFISGFL). The Cytoplasmic portion of the chain corresponds to 157–231 (SLLQYKQPID…IQARRVTWAL (75 aa)). The RVxF motif lies at 225-229 (RRVTW).

As to quaternary structure, interacts (via RVxF motif) with PPP1CC.

Its subcellular location is the cytoplasmic vesicle. It localises to the secretory vesicle. The protein resides in the acrosome membrane. In terms of biological role, probably inhibits protein phosphatase 1 (PP1) in sperm via binding to catalytic subunit PPP1CC. The polypeptide is Transmembrane protein 225 (TMEM225) (Bos taurus (Bovine)).